Reading from the N-terminus, the 124-residue chain is Large ribosomal subunit protein eL22y (124 aa).

Belongs to the eukaryotic ribosomal protein eL22 family.

This Arabidopsis thaliana (Mouse-ear cress) protein is Large ribosomal subunit protein eL22y (RPL22C).